We begin with the raw amino-acid sequence, 174 residues long: DNA-directed RNA polymerase IV subunit 7 (174 aa).

Belongs to the eukaryotic RPB7/RPC8 RNA polymerase subunit family. Component of the RNA polymerase IV complex. Interacts with NRPD1.

The protein localises to the nucleus. Functionally, DNA-dependent RNA polymerase catalyzes the transcription of DNA into RNA using the four ribonucleoside triphosphates as substrates. Component of RNA polymerase IV which mediates 24-nt short-interfering RNAs (siRNA) accumulation. Implicated in siRNA-directed heterochromatin formation through the action of DCL3 and AGO4, and subsequent DNA methylation-dependent silencing of targeted sequences. Essential component of a self-reinforcing loop coupling de novo DNA methylation to siRNA production. Required for intercellular but not intracellular RNA interference (RNAi) leading to systemic post-transcriptional gene silencing. Involved in the maintenance of post-transcriptional RNA silencing. This is DNA-directed RNA polymerase IV subunit 7 (NRPD7) from Arabidopsis thaliana (Mouse-ear cress).